The chain runs to 722 residues: Ras and EF-hand domain-containing protein (722 aa).

2 consecutive EF-hand domains span residues Asp-5–Val-39 and Val-39–Leu-74. The segment covering His-75–Glu-84 has biased composition (basic and acidic residues). Positions His-75–Trp-109 are disordered. Residues Arg-156–Asp-335 are a coiled coil. The span at Ile-355 to Thr-374 shows a compositional bias: polar residues. Disordered regions lie at residues Ile-355–Ser-384 and Phe-439–Ser-491. Residues Ser-480–Ser-491 are compositionally biased toward low complexity. GTP contacts are provided by residues Ala-532–Ser-537, Asn-635–Asp-638, and Ala-672–Lys-673.

The protein belongs to the small GTPase superfamily. Rab family. In terms of assembly, homodimer.

Its subcellular location is the cytoplasm. It is found in the perinuclear region. In terms of biological role, binds predominantly GDP, and also GTP. This is Ras and EF-hand domain-containing protein (rasef) from Xenopus tropicalis (Western clawed frog).